Here is a 161-residue protein sequence, read N- to C-terminus: General odorant-binding protein 2 (161 aa).

A signal peptide spans 1–20 (MVNRLILMVVVVFITDSVMG). 3 cysteine pairs are disulfide-bonded: Cys-39-Cys-74, Cys-70-Cys-128, and Cys-117-Cys-137.

It belongs to the PBP/GOBP family. In terms of assembly, homodimer. As to expression, olfactory tissue; expressed by the glia-like support cells that ensheathe the sensory neurons and line the base of the sensillum lumen.

Functionally, present in the aqueous fluid surrounding olfactory sensory dendrites and are thought to aid in the capture and transport of hydrophobic odorants into and through this fluid. The chain is General odorant-binding protein 2 (GOBP2) from Manduca sexta (Tobacco hawkmoth).